Here is a 184-residue protein sequence, read N- to C-terminus: Acetyl-CoA decarbonylase/synthase complex subunit epsilon 1 (184 aa).

The protein belongs to the CdhB family. As to quaternary structure, heterotetramer of two alpha and two epsilon subunits. The ACDS complex is made up of alpha, epsilon, beta, gamma and delta subunits with a probable stoichiometry of (alpha(2)epsilon(2))(4)-beta(8)-(gamma(1)delta(1))(8).

In terms of biological role, part of a complex that catalyzes the reversible cleavage of acetyl-CoA, allowing autotrophic growth from CO(2). The alpha-epsilon subcomponent functions as a carbon monoxide dehydrogenase. The precise role of the epsilon subunit is unclear; it may have a stabilizing role within the alpha(2)epsilon(2) component and/or be involved in electron transfer to FAD during a potential FAD-mediated CO oxidation. This is Acetyl-CoA decarbonylase/synthase complex subunit epsilon 1 (cdhB1) from Archaeoglobus fulgidus (strain ATCC 49558 / DSM 4304 / JCM 9628 / NBRC 100126 / VC-16).